The chain runs to 825 residues: Probable inorganic carbon transporter subunit DabA (825 aa).

Zn(2+) contacts are provided by Cys334, Asp336, His521, and Cys536.

The protein belongs to the inorganic carbon transporter (TC 9.A.2) DabA family. As to quaternary structure, forms a complex with DabB. Zn(2+) serves as cofactor.

The protein resides in the cell inner membrane. Part of an energy-coupled inorganic carbon pump. This Acidithiobacillus ferrooxidans (strain ATCC 53993 / BNL-5-31) (Leptospirillum ferrooxidans (ATCC 53993)) protein is Probable inorganic carbon transporter subunit DabA.